Consider the following 403-residue polypeptide: Creatinase (403 aa).

The active site involves histidine 232.

It belongs to the peptidase M24 family. Creatinase subfamily. Homodimer.

It carries out the reaction creatine + H2O = sarcosine + urea. The polypeptide is Creatinase (Pseudomonas putida (Arthrobacter siderocapsulatus)).